The primary structure comprises 539 residues: CTP synthase (539 aa).

The interval 1–268 is amidoligase domain; it reads MADTKYIFVT…DETVLRKVGL (268 aa). S15 contributes to the CTP binding site. Residue S15 participates in UTP binding. 16–21 lines the ATP pocket; sequence SLGKGI. Y56 is a binding site for L-glutamine. D73 serves as a coordination point for ATP. D73 and E143 together coordinate Mg(2+). CTP-binding positions include 150–152, 189–194, and K225; these read DIE and KTKPTQ. UTP-binding positions include 189–194 and K225; that span reads KTKPTQ. The region spanning 294-536 is the Glutamine amidotransferase type-1 domain; that stretch reads TIALVGKYVE…IREAIKTRKK (243 aa). An L-glutamine-binding site is contributed by G356. The active-site Nucleophile; for glutamine hydrolysis is C383. L-glutamine contacts are provided by residues 384–387, E407, and R464; that span reads LGMQ. Active-site residues include H509 and E511.

This sequence belongs to the CTP synthase family. Homotetramer.

It catalyses the reaction UTP + L-glutamine + ATP + H2O = CTP + L-glutamate + ADP + phosphate + 2 H(+). The catalysed reaction is L-glutamine + H2O = L-glutamate + NH4(+). It carries out the reaction UTP + NH4(+) + ATP = CTP + ADP + phosphate + 2 H(+). It participates in pyrimidine metabolism; CTP biosynthesis via de novo pathway; CTP from UDP: step 2/2. Its activity is regulated as follows. Allosterically activated by GTP, when glutamine is the substrate; GTP has no effect on the reaction when ammonia is the substrate. The allosteric effector GTP functions by stabilizing the protein conformation that binds the tetrahedral intermediate(s) formed during glutamine hydrolysis. Inhibited by the product CTP, via allosteric rather than competitive inhibition. Functionally, catalyzes the ATP-dependent amination of UTP to CTP with either L-glutamine or ammonia as the source of nitrogen. Regulates intracellular CTP levels through interactions with the four ribonucleotide triphosphates. The sequence is that of CTP synthase from Porphyromonas gingivalis (strain ATCC BAA-308 / W83).